The following is a 324-amino-acid chain: MTKSETTLSKLLVESELVQECEELLSSLPRDRSVFAEYLYQYQGFWYPPNLLEGVLYSQKHFQARDSDIVLASIPKSGTTWLKSLVFALIHRQEFQTPLVSHPLLDNNPHTLVTFIEGFHLHTQDTSPRIFSTHIPVGSLPESVKDSSCKVVYCCRNPKDAFVSLWHFMKNLIVKEMVGCTMEEMVRFFCRGSSIYGPFWDHVLQYWKESRENPKKVMFVMYEEMREQPQEWVMRIAEFLGYSFTEEEIENGVLEDIIKLCSLENLSKLEVNEKGKLLNGMETKAFFRKGEIGGWRDTLTPLLAEEIDKTTKEKLIGSDFRFFC.

A 3'-phosphoadenylyl sulfate-binding site is contributed by 76 to 81; that stretch reads KSGTTW. His134 serves as the catalytic Proton acceptor. Residues Arg156, Ser164, Tyr222, and 288 to 290 each bind 3'-phosphoadenylyl sulfate; that span reads RKG.

The protein belongs to the sulfotransferase 1 family.

It is found in the cytoplasm. Sulfotransferase that utilizes 3'-phospho-5'-adenylyl sulfate (PAPS) as sulfonate donor. This Arabidopsis thaliana (Mouse-ear cress) protein is Cytosolic sulfotransferase 13 (SOT13).